Consider the following 1133-residue polypeptide: Envelopment polyprotein (1133 aa).

A signal peptide spans 1-16; it reads MWSLLLLAALVGQGFA. At 17–484 the chain is on the lumenal side; the sequence is LKNVFDMRIQ…PGFHGWATAA (468 aa). 10 cysteine pairs are disulfide-bonded: C61/C155, C107/C126, C131/C136, C173/C183, C208/C245, C232/C349, C374/C433, C378/C387, C403/C422, and C450/C473. N-linked (GlcNAc...) asparagine; by host glycosylation is present at N132. N233 and N345 each carry an N-linked (GlcNAc...) asparagine; by host glycan. An N-linked (GlcNAc...) asparagine; by host glycan is attached at N397. Residues 485–504 traverse the membrane as a helical segment; that stretch reads LLITFCFGWVLIPACTLAIL. Residues 505-626 lie on the Cytoplasmic side of the membrane; sequence LVLKFFANIL…NLFRYKSRCY (122 aa). The binding to the ribonucleoprotein stretch occupies residues 514–531; sequence LHTSNQENRFKAILRKIK. CCHC-type zinc fingers lie at residues 543–563 and 568–589; these read CEIC…NLSC and CPYC…YKVC. Binding to the ribonucleoprotein stretches follow at residues 586–603, 590–601, and 609–623; these read YKVC…KKTV, QATHRFREDLKK, and GPGC…RYKS. Residues 609 to 632 form the ITAM domain; that stretch reads GPGCYRTLNLFRYKSRCYILTMWT. Positions 613–616 match the YxxL motif; that stretch reads YRTL. A helical membrane pass occupies residues 627–647; the sequence is ILTMWTLLLIIESILWAASAA. The Lumenal segment spans residues 648–1105; it reads EIPLVPLWTD…VMGIINGNWV (458 aa). Disulfide bonds link C733-C768, C737-C775, C749-C883, C763-C894, C778-C902, C804-C813, C821-C830, and C861-C865. The fusion loop stretch occupies residues 755–775; that stretch reads YEYENSWACNPPDCPGVGTGC. A glycan (N-linked (GlcNAc...) asparagine; by host) is linked at N926. Cystine bridges form between C968-C998, C991-C1043, C1008-C1013, C1044-C1049, and C1083-C1087. Residues 1106-1125 form a helical membrane-spanning segment; it reads VLIVLCVLLLFSLILLSILC. A binding to the ribonucleoprotein region spans residues 1120 to 1133; it reads LLSILCPVRKHKKS. At 1126–1133 the chain is on the cytoplasmic side; the sequence is PVRKHKKS.

The protein belongs to the hantavirus envelope glycoprotein family. As to quaternary structure, homodimer. Homotetramer; forms heterotetrameric Gn-Gc spikes in the pre-fusion conformation. Interacts (via C-terminus) with the nucleoprotein. Interacts with host TUFM; this interaction contributes to the virus-induced degradation of mitochondria by autophagy, which leads to degradation of host MAVS and inhibition of type I interferon (IFN) responses. Interacts with host MAP1LC3B; this interaction contributes to the virus-induced degradation of mitochondria by autophagy, which leads to degradation of host MAVS and inhibition of type I interferon (IFN) responses. In terms of assembly, homodimer. Homotetramer; forms heterotetrameric Gn-Gc spikes in the pre-fusion conformation. Homotrimer; forms homotrimer in the post-fusion conformation at acidic pH. Interacts (via C-terminus) with the nucleoprotein. Post-translationally, envelope polyprotein precursor is quickly cleaved in vivo just after synthesis, presumably by host signal peptidase.

It localises to the virion membrane. The protein resides in the host cell surface. Its subcellular location is the host Golgi apparatus membrane. The protein localises to the host endoplasmic reticulum membrane. It is found in the host mitochondrion. In terms of biological role, forms homotetramers with glycoprotein C at the surface of the virion. Attaches the virion to host cell receptors including integrin ITGAV/ITGB3. This attachment induces virion internalization predominantly through clathrin-dependent endocytosis. Mediates the assembly and budding of infectious virus particles through its interaction with the nucleocapsid protein and the viral genome. May dysregulate normal immune and endothelial cell responses through an ITAM motif. Translocates to mitochondria, binds to host TUFM and recruits MAP1LC3B. These interactions induce mitochondrial autophagy and therefore destruction of host MAVS leading to inhibition of type I interferon (IFN) responses. Concomitant breakdown of glycoprotein N is apparently prevented by the nucleoprotein that may inhibit Gn-stimulated autophagosome-lysosome fusion. Interacts with the viral genomic RNA. Forms homotetramers with glycoprotein N at the surface of the virion. Attaches the virion to host cell receptors including integrin ITGAV/ITGB3. This attachment induces virion internalization predominantly through clathrin-dependent endocytosis. Class II fusion protein that promotes fusion of viral membrane with host endosomal membrane after endocytosis of the virion. In Homo sapiens (Human), this protein is Envelopment polyprotein (GP).